The following is a 421-amino-acid chain: Lipid II:glycine glycyltransferase (421 aa).

Belongs to the FemABX family. Monomer.

The protein localises to the cytoplasm. The catalysed reaction is beta-D-GlcNAc-(1-&gt;4)-Mur2Ac(oyl-L-Ala-D-isoglutaminyl-L-Lys-D-Ala-D-Ala)-di-trans,octa-cis-undecaprenyl diphosphate + glycyl-tRNA(Gly) = beta-D-GlcNAc-(1-&gt;4)-Mur2Ac(oyl-L-Ala-D-isoglutaminyl-L-Lys-(N(6)-Gly)-D-Ala-D-Ala)-di-trans,octa-cis-undecaprenyl diphosphate + tRNA(Gly) + H(+). Functionally, catalyzes the incorporation of the first glycine of the pentaglycine interpeptide bridge, which is characteristic of the S.aureus peptidoglycan. This glycine is added to the epsilon-amino group of the L-lysine of the membrane-bound lipid II intermediate (GlcNAc-(beta-1,4)-N-acetylmuramic acid(-L-Ala-D-iGln-L-Lys-D-Ala-D-Ala)-pyrophosphoryl-undecaprenol), using glycyl-tRNA(Gly) as donor, in a ribosome-independent mechanism. Involved in methicillin resistance. The sequence is that of Lipid II:glycine glycyltransferase (femX) from Staphylococcus aureus (strain MRSA252).